Consider the following 41-residue polypeptide: Large ribosomal subunit protein bL36 (41 aa).

It belongs to the bacterial ribosomal protein bL36 family.

This chain is Large ribosomal subunit protein bL36, found in Bartonella bacilliformis (strain ATCC 35685 / KC583 / Herrer 020/F12,63).